Reading from the N-terminus, the 471-residue chain is Serine hydroxymethyltransferase, cytosolic (471 aa).

N6-(pyridoxal phosphate)lysine is present on lysine 249.

This sequence belongs to the SHMT family. Pyridoxal 5'-phosphate serves as cofactor.

It localises to the cytoplasm. The protein localises to the cytosol. The catalysed reaction is (6R)-5,10-methylene-5,6,7,8-tetrahydrofolate + glycine + H2O = (6S)-5,6,7,8-tetrahydrofolate + L-serine. Its pathway is one-carbon metabolism; tetrahydrofolate interconversion. Functionally, catalyzes the interconversion of serine and glycine. Essential for viability and required for virulence in a murine model of established pulmonary infection. The sequence is that of Serine hydroxymethyltransferase, cytosolic from Aspergillus fumigatus (strain ATCC MYA-4609 / CBS 101355 / FGSC A1100 / Af293) (Neosartorya fumigata).